The chain runs to 174 residues: uncharacterized protein (174 aa).

Residues 7–27 (LIILAIFTLWVGGFGYYLYLI) form a helical membrane-spanning segment.

The protein resides in the membrane. This is an uncharacterized protein from Rickettsia prowazekii (strain Madrid E).